The sequence spans 442 residues: 5'-deoxyadenosine deaminase (442 aa).

2 residues coordinate Zn(2+): His72 and His74. Glu101 and His193 together coordinate substrate. His220 provides a ligand contact to Zn(2+). Glu223 and Asp309 together coordinate substrate. Asp309 lines the Zn(2+) pocket.

This sequence belongs to the metallo-dependent hydrolases superfamily. MTA/SAH deaminase family. In terms of assembly, homotetramer. It depends on Zn(2+) as a cofactor.

It catalyses the reaction 5'-deoxyadenosine + H2O + H(+) = 5'-deoxyinosine + NH4(+). The catalysed reaction is S-adenosyl-L-homocysteine + H2O + H(+) = S-inosyl-L-homocysteine + NH4(+). It carries out the reaction S-methyl-5'-thioadenosine + H2O + H(+) = S-methyl-5'-thioinosine + NH4(+). The enzyme catalyses adenosine + H2O + H(+) = inosine + NH4(+). It participates in amino-acid biosynthesis; S-adenosyl-L-methionine biosynthesis. Its function is as follows. Catalyzes the deamination of three SAM-derived enzymatic products, namely 5'-deoxyadenosine, S-adenosyl-L-homocysteine, and 5'-methylthioadenosine, to produce the inosine analogs. Can also deaminate adenosine. The preferred substrate for this enzyme is 5'-deoxyadenosine, but all these substrates are efficiently deaminated. Likely functions in a S-adenosyl-L-methionine (SAM) recycling pathway from S-adenosyl-L-homocysteine (SAH) produced from SAM-dependent methylation reactions. May also be involved in the recycling of 5'-deoxyadenosine, whereupon the 5'-deoxyribose moiety of 5'-deoxyinosine is further metabolized to deoxyhexoses used for the biosynthesis of aromatic amino acids in methanogens. In Methanoregula boonei (strain DSM 21154 / JCM 14090 / 6A8), this protein is 5'-deoxyadenosine deaminase.